The primary structure comprises 468 residues: Trehalose-binding lipoprotein LpqY (468 aa).

Residues 1–25 (MVMSRGRIPRLGAAVLVALTTAAAA) form the signal peptide. Residue Cys26 is the site of N-palmitoyl cysteine attachment. Cys26 is lipidated: S-diacylglycerol cysteine. Cys54 and Cys372 are disulfide-bonded. Asp97, Asn151, Trp276, Phe278, Gly351, and Arg421 together coordinate alpha,alpha-trehalose.

Belongs to the bacterial solute-binding protein 1 family. In terms of assembly, monomer. The complex is composed of two ATP-binding proteins (SugC), two transmembrane proteins (SugA and SugB) and a solute-binding protein (LpqY).

The protein localises to the cell inner membrane. Part of the ABC transporter complex LpqY-SugA-SugB-SugC, which is highly specific for uptake of trehalose. Involved in the recycling of extracellular trehalose released from trehalose-containing molecules synthesized by M.tuberculosis. Trehalose uptake is essential for virulence. In Mycobacterium tuberculosis (strain CDC 1551 / Oshkosh), this protein is Trehalose-binding lipoprotein LpqY (lpqY).